The chain runs to 160 residues: MAEQTEKAFLKQPKVFLSSKKSGKGKRPGKGGNRFWKNIGLGFKTPREAIDGAYVDKKCPFTGTVSIRGRILAGTCHSAKMQRTIIVRRDYLHFVKKYQRYEKRHSNIPAHVSPCFRVKEGDHIIIGQCRPLSKTVRFNVLKVIPAGSSSSFGKKAFTGM.

This sequence belongs to the universal ribosomal protein uS17 family.

It localises to the cytoplasm. This is Small ribosomal subunit protein uS17z (RPS11A) from Arabidopsis thaliana (Mouse-ear cress).